Here is a 341-residue protein sequence, read N- to C-terminus: Trace amine-associated receptor 13c (341 aa).

Over methionine 1 to valine 34 the chain is Extracellular. The N-linked (GlcNAc...) asparagine glycan is linked to asparagine 19. 2 disulfide bridges follow: cysteine 22–cysteine 186 and cysteine 105–cysteine 186. Residues valine 35–isoleucine 55 form a helical membrane-spanning segment. Topologically, residues serine 56–asparagine 68 are cytoplasmic. A helical membrane pass occupies residues isoleucine 69–serine 89. Residues methionine 90–cysteine 105 are Extracellular-facing. The helical transmembrane segment at leucine 106–isoleucine 126 threads the bilayer. The Cytoplasmic portion of the chain corresponds to alanine 127 to proline 147. The chain crosses the membrane as a helical span at residues valine 148–valine 168. The Extracellular segment spans residues tyrosine 169 to asparagine 195. A helical transmembrane segment spans residues alanine 196–alanine 219. The Cytoplasmic segment spans residues arginine 220–threonine 257. A helical transmembrane segment spans residues leucine 258–valine 278. At aspartate 279 to aspartate 292 the chain is on the extracellular side. Residue asparagine 283 is glycosylated (N-linked (GlcNAc...) asparagine). Residues alanine 293–tyrosine 313 traverse the membrane as a helical segment. Over proline 314–valine 341 the chain is Cytoplasmic.

Belongs to the G-protein coupled receptor 1 family. Expressed in olfactory epithelium (at protein level). Detected in a sparse population of olfactory sensory neurons.

Its subcellular location is the cell membrane. In terms of biological role, olfactory receptor for medium length odd-chained diamines including cadaverine which is generated by bacterial decarboxylation of the basic amino acid lysine and contributes to the odor of decomposing tissue. Mediates pronounced innate aversion behavior to cadaverine. This Danio rerio (Zebrafish) protein is Trace amine-associated receptor 13c.